Here is a 488-residue protein sequence, read N- to C-terminus: Membrane-bound lytic murein transglycosylase F (488 aa).

Residues 1–25 (MFARPAIRMRCATGLLAIGTLLMLA) form the signal peptide. The non-LT domain stretch occupies residues 26–269 (GCGEEPKPSV…RLKERYYGHV (244 aa)). The interval 270-488 (DVLGYVGAYT…RTLDEQTPPL (219 aa)) is LT domain. The active site involves Glu316.

The protein in the N-terminal section; belongs to the bacterial solute-binding protein 3 family. This sequence in the C-terminal section; belongs to the transglycosylase Slt family.

It localises to the cell outer membrane. The catalysed reaction is Exolytic cleavage of the (1-&gt;4)-beta-glycosidic linkage between N-acetylmuramic acid (MurNAc) and N-acetylglucosamine (GlcNAc) residues in peptidoglycan, from either the reducing or the non-reducing ends of the peptidoglycan chains, with concomitant formation of a 1,6-anhydrobond in the MurNAc residue.. Murein-degrading enzyme that degrades murein glycan strands and insoluble, high-molecular weight murein sacculi, with the concomitant formation of a 1,6-anhydromuramoyl product. Lytic transglycosylases (LTs) play an integral role in the metabolism of the peptidoglycan (PG) sacculus. Their lytic action creates space within the PG sacculus to allow for its expansion as well as for the insertion of various structures such as secretion systems and flagella. This is Membrane-bound lytic murein transglycosylase F from Ectopseudomonas mendocina (strain ymp) (Pseudomonas mendocina).